A 1590-amino-acid chain; its full sequence is von Willebrand factor D and EGF domain-containing protein (1590 aa).

An N-terminal signal peptide occupies residues 1–20 (MPGGACVLVIALMFLAWGEA). N-linked (GlcNAc...) asparagine glycosylation is present at N367. Residues 423 to 606 (AYCYTFTDPH…EWRILPGKSM (184 aa)) form the VWFD domain. 2 disulfide bridges follow: C425–C565 and C468–C477. N703 and N968 each carry an N-linked (GlcNAc...) asparagine glycan. The 40-residue stretch at 1177–1216 (TVKSCDCLNGGSCVSDRNFSPGSGVYLCVCLPGFHGSLCE) folds into the EGF-like 1 domain. Disulfide bonds link C1181-C1189, C1183-C1204, and C1206-C1215. Residues 1268–1280 (DKSVNKEEDDKNA) show a composition bias toward basic and acidic residues. Residues 1268–1288 (DKSVNKEEDDKNAQGRKRHVK) form a disordered region. EGF-like domains follow at residues 1294–1326 (AFTI…SNCQ), 1358–1390 (DEEH…PRCE), 1422–1454 (STAL…EHCQ), 1455–1486 (NAFC…RRFQ), 1518–1550 (NTPI…VRCQ), and 1551–1582 (IPIC…VKCE). 17 disulfide bridges follow: C1298–C1308, C1302–C1314, C1316–C1325, C1362–C1372, C1366–C1378, C1380–C1389, C1426–C1436, C1430–C1442, C1444–C1453, C1458–C1468, C1462–C1474, C1522–C1532, C1526–C1538, C1540–C1549, C1554–C1564, C1558–C1570, and C1572–C1581.

The protein resides in the secreted. The protein is von Willebrand factor D and EGF domain-containing protein (VWDE) of Homo sapiens (Human).